A 467-amino-acid polypeptide reads, in one-letter code: MNKGKIKQIIGSVLDIEFENGELPEIYNALEIEATVSGKREILIAEVQTHIGGKAIRAIALSSTDGLIRGQEVTNTGKPISVPVGDATLGRIFNVLGKTIDEGPAITVKETRPIHRPAPAFDELTSKTEVFETGIKVIDLLAPYIKGGKTGLFGGAGVGKTVLIQELINNIAKQHGGFSVFAGVGERTREGNDLWREMKESGVIDKTVLCYGQMNEPPGARLRVALSALTMAEHFRDSIGTDVLLFVDNIFRFSQAGSEVSALLGRMPSAVGYQPTLSTEMGALQERITSTKKGSITSVQAIYVPADDLTDPAPANAFAHLDATTVLSRAISDKGIYPAVDPLDSTSRVMNAQVLGEEHYTVAREVQRILQRYKDLQDIIAILGMDELSEDDKVLVARARKIEKFLSQPFHVAEVFTGAPGKYVKLADTVRSFKEVISGNYDHLPEQAFYMVGSIDDAIEKAKGYKG.

154-161 is an ATP binding site; sequence GGAGVGKT.

It belongs to the ATPase alpha/beta chains family. As to quaternary structure, F-type ATPases have 2 components, CF(1) - the catalytic core - and CF(0) - the membrane proton channel. CF(1) has five subunits: alpha(3), beta(3), gamma(1), delta(1), epsilon(1). CF(0) has three main subunits: a(1), b(2) and c(9-12). The alpha and beta chains form an alternating ring which encloses part of the gamma chain. CF(1) is attached to CF(0) by a central stalk formed by the gamma and epsilon chains, while a peripheral stalk is formed by the delta and b chains.

The protein localises to the cell inner membrane. It carries out the reaction ATP + H2O + 4 H(+)(in) = ADP + phosphate + 5 H(+)(out). Functionally, produces ATP from ADP in the presence of a proton gradient across the membrane. The catalytic sites are hosted primarily by the beta subunits. The chain is ATP synthase subunit beta from Leptospira borgpetersenii serovar Hardjo-bovis (strain JB197).